The sequence spans 452 residues: NADH-ubiquinone oxidoreductase chain 4 (452 aa).

The next 14 membrane-spanning stretches (helical) occupy residues leucine 4 to tryptophan 24, valine 29 to serine 49, phenylalanine 59 to serine 79, leucine 88 to methionine 110, leucine 114 to glycine 136, alanine 144 to isoleucine 164, valine 182 to valine 202, proline 221 to methionine 241, methionine 252 to isoleucine 272, leucine 282 to tryptophan 304, alanine 309 to tyrosine 331, leucine 345 to alanine 365, isoleucine 390 to methionine 410, and leucine 432 to phenylalanine 452.

The protein belongs to the complex I subunit 4 family.

The protein resides in the mitochondrion membrane. The enzyme catalyses a ubiquinone + NADH + 5 H(+)(in) = a ubiquinol + NAD(+) + 4 H(+)(out). Functionally, core subunit of the mitochondrial membrane respiratory chain NADH dehydrogenase (Complex I) that is believed to belong to the minimal assembly required for catalysis. Complex I functions in the transfer of electrons from NADH to the respiratory chain. The immediate electron acceptor for the enzyme is believed to be ubiquinone. In Branchiostoma lanceolatum (Common lancelet), this protein is NADH-ubiquinone oxidoreductase chain 4 (ND4).